Consider the following 239-residue polypeptide: Dihydromethanopterin reductase (acceptor) (239 aa).

4Fe-4S ferredoxin-type domains follow at residues 144 to 175 and 176 to 205; these read MPYNIDRKQCKHCETCPPRENCPHEAISEKNG and VTDQIDLLKCKGCGICKELCPYNAIKGGPV. Residues C153, C156, C159, C165, C185, C188, C191, and C195 each contribute to the [4Fe-4S] cluster site.

In terms of assembly, homodimer. Requires [4Fe-4S] cluster as cofactor.

The enzyme catalyses 5,6,7,8-tetrahydromethanopterin + A = 7,8-dihydromethanopterin + AH2. Its pathway is cofactor biosynthesis; 5,6,7,8-tetrahydromethanopterin biosynthesis. Functionally, involved in the biosynthesis of tetrahydromethanopterin, a coenzyme used in methanogenesis. Catalyzes the reduction of dihydromethanopterin (H(2)MPT) to tetrahydromethanopterin (H(4)MPT). Ferredoxin may serve as an electron donor. The chain is Dihydromethanopterin reductase (acceptor) from Methanosarcina mazei (strain ATCC BAA-159 / DSM 3647 / Goe1 / Go1 / JCM 11833 / OCM 88) (Methanosarcina frisia).